Here is an 81-residue protein sequence, read N- to C-terminus: Sulfur carrier protein TusA (81 aa).

The Cysteine persulfide intermediate role is filled by Cys19.

This sequence belongs to the sulfur carrier protein TusA family.

Its subcellular location is the cytoplasm. In terms of biological role, sulfur carrier protein which probably makes part of a sulfur-relay system. This is Sulfur carrier protein TusA from Shewanella piezotolerans (strain WP3 / JCM 13877).